The sequence spans 258 residues: MDDDLTEYAPDIPDNVLELIFSYLKLQDLRNCALVCKSWHRFLSDENNEVWRAQCMQKLSPDAFKTDLLSVVPTYKAKLRAFFHAWNPYDCSRHVYIKPNGFTLHRNPVAQSTDGSRGKIGFQHGRHAWEVRWEGPLGTVAVVGIATKDAAIQCHGYYALLGADDQSWGWNLVDNLLLHNGDAHGIYPLLNNAPKYKVGERIRVILDCDDNTLSFEKNYEFLGVAFTDLPDKVFYPTVAAVYGNTEISMVYLGPPLDG.

The region spanning 6–54 (TEYAPDIPDNVLELIFSYLKLQDLRNCALVCKSWHRFLSDENNEVWRAQ) is the F-box domain. The 193-residue stretch at 64–256 (FKTDLLSVVP…ISMVYLGPPL (193 aa)) folds into the B30.2/SPRY domain.

The protein belongs to the FBXO45/Fsn family. In terms of assembly, component of an E3 ubiquitin ligase complex composed of hiw and Fsn.

The protein resides in the synapse. Its pathway is protein modification; protein ubiquitination. In terms of biological role, required in the presynaptic motoneuron to down-regulate the levels of wnd and restrain synaptic terminal growth at the neuromuscular junction (NMJ). This chain is F-box/SPRY domain-containing protein 1, found in Culex quinquefasciatus (Southern house mosquito).